The following is a 184-amino-acid chain: U3 small nucleolar ribonucleoprotein protein IMP3 (184 aa).

The S4 RNA-binding domain maps to 109–175 (RRLPTVLLKL…IKRHVLEYNE (67 aa)).

Belongs to the universal ribosomal protein uS4 family. Part of the small subunit (SSU) processome, composed of more than 70 proteins and the RNA chaperone small nucleolar RNA (snoRNA) U3. Component of a heterotrimeric complex containing IMP3, IMP4 and MPHOSPH10. Interacts with MPHOSPH10.

It is found in the nucleus. The protein localises to the nucleolus. Component of the 60-80S U3 small nucleolar ribonucleoprotein (U3 snoRNP). Required for the early cleavages during pre-18S ribosomal RNA processing. Part of the small subunit (SSU) processome, first precursor of the small eukaryotic ribosomal subunit. During the assembly of the SSU processome in the nucleolus, many ribosome biogenesis factors, an RNA chaperone and ribosomal proteins associate with the nascent pre-rRNA and work in concert to generate RNA folding, modifications, rearrangements and cleavage as well as targeted degradation of pre-ribosomal RNA by the RNA exosome. This chain is U3 small nucleolar ribonucleoprotein protein IMP3, found in Homo sapiens (Human).